The primary structure comprises 290 residues: UPF0761 membrane protein ASA_4118 (290 aa).

6 consecutive transmembrane segments (helical) span residues 48-68 (LLSL…FPVF), 104-124 (NTTA…ISAI), 144-164 (FAMY…SIAI), 182-202 (IGYL…FLLV), 216-236 (AFIG…GFAI), and 250-270 (ALAT…VVLL).

Belongs to the UPF0761 family.

The protein resides in the cell inner membrane. This Aeromonas salmonicida (strain A449) protein is UPF0761 membrane protein ASA_4118.